We begin with the raw amino-acid sequence, 415 residues long: Gamma-glutamyl phosphate reductase (415 aa).

Belongs to the gamma-glutamyl phosphate reductase family.

It is found in the cytoplasm. It catalyses the reaction L-glutamate 5-semialdehyde + phosphate + NADP(+) = L-glutamyl 5-phosphate + NADPH + H(+). It participates in amino-acid biosynthesis; L-proline biosynthesis; L-glutamate 5-semialdehyde from L-glutamate: step 2/2. Its function is as follows. Catalyzes the NADPH-dependent reduction of L-glutamate 5-phosphate into L-glutamate 5-semialdehyde and phosphate. The product spontaneously undergoes cyclization to form 1-pyrroline-5-carboxylate. The chain is Gamma-glutamyl phosphate reductase from Listeria monocytogenes serotype 4b (strain F2365).